The primary structure comprises 192 residues: Imidazoleglycerol-phosphate dehydratase (192 aa).

This sequence belongs to the imidazoleglycerol-phosphate dehydratase family.

Its subcellular location is the cytoplasm. The catalysed reaction is D-erythro-1-(imidazol-4-yl)glycerol 3-phosphate = 3-(imidazol-4-yl)-2-oxopropyl phosphate + H2O. Its pathway is amino-acid biosynthesis; L-histidine biosynthesis; L-histidine from 5-phospho-alpha-D-ribose 1-diphosphate: step 6/9. This is Imidazoleglycerol-phosphate dehydratase from Caldivirga maquilingensis (strain ATCC 700844 / DSM 13496 / JCM 10307 / IC-167).